The primary structure comprises 196 residues: UMP-CMP kinase (196 aa).

13–18 (GAGKGT) lines the ATP pocket. Position 33 is a phosphoserine (serine 33). The tract at residues 33–63 (SAGELLRDERKNPDSQYGELIEKYIKDGKIV) is NMP. Arginine 39 is an a ribonucleoside 5'-phosphate binding site. Lysine 43 and lysine 55 each carry N6-acetyllysine. Residues 61–63 (KIV) and 93–96 (GFPR) each bind a ribonucleoside 5'-phosphate. Asparagine 100 provides a ligand contact to CMP. Lysine 106 is subject to N6-succinyllysine. The LID stretch occupies residues 133–143 (ERGKSSGRSDD). Arginine 134 is an ATP binding site. Residues arginine 140 and arginine 151 each coordinate a ribonucleoside 5'-phosphate. Lysine 179 is an ATP binding site. Residue serine 180 is modified to Phosphoserine.

It belongs to the adenylate kinase family. UMP-CMP kinase subfamily. In terms of assembly, monomer. Mg(2+) is required as a cofactor.

It is found in the nucleus. The protein localises to the cytoplasm. It carries out the reaction CMP + ATP = CDP + ADP. The catalysed reaction is dCMP + ATP = dCDP + ADP. It catalyses the reaction UMP + ATP = UDP + ADP. The enzyme catalyses a 2'-deoxyribonucleoside 5'-diphosphate + ATP = a 2'-deoxyribonucleoside 5'-triphosphate + ADP. It carries out the reaction a ribonucleoside 5'-diphosphate + ATP = a ribonucleoside 5'-triphosphate + ADP. Its function is as follows. Catalyzes the phosphorylation of pyrimidine nucleoside monophosphates at the expense of ATP. Plays an important role in de novo pyrimidine nucleotide biosynthesis. Has preference for UMP and CMP as phosphate acceptors. Also displays broad nucleoside diphosphate kinase activity. This chain is UMP-CMP kinase, found in Sus scrofa (Pig).